The primary structure comprises 58 residues: MVAKVNVDLCTGCGSCVDECPAAAISLNDDGIATVDESECLDCGSCEDACPNNAITIE.

2 4Fe-4S ferredoxin-type domains span residues 2-30 (VAKV…LNDD) and 31-58 (GIAT…ITIE). The [4Fe-4S] cluster site is built by C10, C13, C16, C20, C40, C43, C46, and C50.

It depends on [4Fe-4S] cluster as a cofactor.

Functionally, ferredoxins are iron-sulfur proteins that transfer electrons in a wide variety of metabolic reactions. In Methanosarcina thermophila, this protein is Probable ferredoxin.